A 236-amino-acid chain; its full sequence is Regulatory protein cys-3 (236 aa).

A disordered region spans residues 26 to 89; it reads TLGQLQPIQP…MSVPPTPGAR (64 aa). The segment covering 28–37 has biased composition (polar residues); it reads GQLQPIQPNP. Residues 99–162 form the bZIP domain; that stretch reads LAAEEDKRKR…KWLKGLVTEK (64 aa). A basic motif region spans residues 105–137; the sequence is KRKRNTAASARFRIKKKQREQALEKSAKEMSEK. The leucine-zipper stretch occupies residues 141-155; it reads LEGRIQALETENKWL. A disordered region spans residues 189–236; sequence AAAADKAEAAADKADAERAREESSFCVSTSSPSSDESVDTDNKKRRKD. A compositionally biased stretch (basic and acidic residues) spans 193–211; the sequence is DKAEAAADKADAERAREES. Residues 212 to 223 are compositionally biased toward low complexity; it reads SFCVSTSSPSSD.

The protein belongs to the bZIP family. GCN4 subfamily. Binds DNA as a dimer.

It localises to the nucleus. Its function is as follows. Turns on the expression of structural genes which encode sulfur-catabolic enzymes. Binds to sequence elements upstream of these genes. In Neurospora crassa (strain ATCC 24698 / 74-OR23-1A / CBS 708.71 / DSM 1257 / FGSC 987), this protein is Regulatory protein cys-3 (cys-3).